A 248-amino-acid chain; its full sequence is MKFLVDIHAHTIASTHAYSTFHDYLGVAKAKGIKLFAITDHGPDMADAPHFWHFVNMRVLPRIVDGVGVLRGIEANIKNEHGEIDFFGDYLKELDIVLAGFHEPVFPPSTKEAHTTALINSIESGNVDIITHPGNPAYPIDVKRVASAAAKHNVALEINNSSFLTSRKGSTCNCIEIANAVKAAGGLLVMGSDSHVAFSLGEFEKAIEVIETVGFPIERLLNRSPEALLSFLTARGHKSLDEYSALID.

Positions 8, 10, 16, 41, 74, 102, 132, 193, and 195 each coordinate Zn(2+).

Belongs to the PHP family. Requires Zn(2+) as cofactor.

This Shewanella frigidimarina (strain NCIMB 400) protein is Probable phosphatase Sfri_3709.